A 212-amino-acid polypeptide reads, in one-letter code: Protein-L-isoaspartate O-methyltransferase (212 aa).

Serine 62 is a catalytic residue.

The protein belongs to the methyltransferase superfamily. L-isoaspartyl/D-aspartyl protein methyltransferase family.

Its subcellular location is the cytoplasm. It catalyses the reaction [protein]-L-isoaspartate + S-adenosyl-L-methionine = [protein]-L-isoaspartate alpha-methyl ester + S-adenosyl-L-homocysteine. Catalyzes the methyl esterification of L-isoaspartyl residues in peptides and proteins that result from spontaneous decomposition of normal L-aspartyl and L-asparaginyl residues. It plays a role in the repair and/or degradation of damaged proteins. This Pseudoalteromonas translucida (strain TAC 125) protein is Protein-L-isoaspartate O-methyltransferase.